The chain runs to 365 residues: Bifunctional chorismate mutase/prephenate dehydratase (365 aa).

The 96-residue stretch at 1–96 (MSEADQLKAL…SCLALEQPLR (96 aa)) folds into the Chorismate mutase domain. Substrate contacts are provided by Arg-11, Arg-28, Lys-39, and Glu-57. The Prephenate dehydratase domain maps to 97 to 272 (VAYLGPEGTF…NSTRFLIIGS (176 aa)). Residues 284-361 (SIIVSMRNKP…VALKVLGSYP (78 aa)) form the ACT domain.

Its subcellular location is the cytoplasm. It catalyses the reaction chorismate = prephenate. It carries out the reaction prephenate + H(+) = 3-phenylpyruvate + CO2 + H2O. It functions in the pathway amino-acid biosynthesis; L-phenylalanine biosynthesis; phenylpyruvate from prephenate: step 1/1. The protein operates within metabolic intermediate biosynthesis; prephenate biosynthesis; prephenate from chorismate: step 1/1. Its function is as follows. Catalyzes the Claisen rearrangement of chorismate to prephenate and the decarboxylation/dehydration of prephenate to phenylpyruvate. This chain is Bifunctional chorismate mutase/prephenate dehydratase, found in Stutzerimonas stutzeri (Pseudomonas stutzeri).